Here is a 946-residue protein sequence, read N- to C-terminus: Bifunctional glutamine synthetase adenylyltransferase/adenylyl-removing enzyme (946 aa).

The tract at residues 1–441 is adenylyl removase; that stretch reads MSLLNDAALH…EFNWVIGDDE (441 aa). The segment at 448 to 946 is adenylyl transferase; the sequence is DQALSELWAL…VIKIWEKFLD (499 aa).

Belongs to the GlnE family. It depends on Mg(2+) as a cofactor.

The catalysed reaction is [glutamine synthetase]-O(4)-(5'-adenylyl)-L-tyrosine + phosphate = [glutamine synthetase]-L-tyrosine + ADP. It catalyses the reaction [glutamine synthetase]-L-tyrosine + ATP = [glutamine synthetase]-O(4)-(5'-adenylyl)-L-tyrosine + diphosphate. In terms of biological role, involved in the regulation of glutamine synthetase GlnA, a key enzyme in the process to assimilate ammonia. When cellular nitrogen levels are high, the C-terminal adenylyl transferase (AT) inactivates GlnA by covalent transfer of an adenylyl group from ATP to specific tyrosine residue of GlnA, thus reducing its activity. Conversely, when nitrogen levels are low, the N-terminal adenylyl removase (AR) activates GlnA by removing the adenylyl group by phosphorolysis, increasing its activity. The regulatory region of GlnE binds the signal transduction protein PII (GlnB) which indicates the nitrogen status of the cell. The polypeptide is Bifunctional glutamine synthetase adenylyltransferase/adenylyl-removing enzyme (Psychromonas ingrahamii (strain DSM 17664 / CCUG 51855 / 37)).